Here is a 510-residue protein sequence, read N- to C-terminus: NAD(P)H-quinone oxidoreductase subunit 2 B, chloroplastic (510 aa).

The next 13 helical transmembrane spans lie at 24–44 (LLLF…GLIL), 57–77 (IPWL…ALLF), 99–119 (IFQF…VEYI), 124–144 (MAIT…MFLC), 149–169 (LITI…LSGY), 183–203 (YLLM…WLYG), 227–247 (PGIS…LSPA), 295–315 (WHLL…LIAI), 323–343 (MLAY…IVGD), 354–374 (YMLF…LFGL), 395–415 (ALSL…AGFF), 418–438 (LYLF…IGLL), and 484–504 (MIVC…IIAI).

It belongs to the complex I subunit 2 family. NDH is composed of at least 16 different subunits, 5 of which are encoded in the nucleus.

The protein resides in the plastid. It localises to the chloroplast thylakoid membrane. It catalyses the reaction a plastoquinone + NADH + (n+1) H(+)(in) = a plastoquinol + NAD(+) + n H(+)(out). The enzyme catalyses a plastoquinone + NADPH + (n+1) H(+)(in) = a plastoquinol + NADP(+) + n H(+)(out). Functionally, NDH shuttles electrons from NAD(P)H:plastoquinone, via FMN and iron-sulfur (Fe-S) centers, to quinones in the photosynthetic chain and possibly in a chloroplast respiratory chain. The immediate electron acceptor for the enzyme in this species is believed to be plastoquinone. Couples the redox reaction to proton translocation, and thus conserves the redox energy in a proton gradient. The chain is NAD(P)H-quinone oxidoreductase subunit 2 B, chloroplastic from Helianthus annuus (Common sunflower).